A 276-amino-acid chain; its full sequence is Exosome complex component Rrp42 (276 aa).

The protein belongs to the RNase PH family. Rrp42 subfamily. As to quaternary structure, component of the archaeal exosome complex. Forms a hexameric ring-like arrangement composed of 3 Rrp41-Rrp42 heterodimers. The hexameric ring associates with a trimer of Rrp4 and/or Csl4 subunits.

Its subcellular location is the cytoplasm. In terms of biological role, non-catalytic component of the exosome, which is a complex involved in RNA degradation. Contributes to the structuring of the Rrp41 active site. The polypeptide is Exosome complex component Rrp42 (Aeropyrum pernix (strain ATCC 700893 / DSM 11879 / JCM 9820 / NBRC 100138 / K1)).